A 201-amino-acid chain; its full sequence is 3-isopropylmalate dehydratase small subunit (201 aa).

The protein belongs to the LeuD family. LeuD type 1 subfamily. Heterodimer of LeuC and LeuD.

The catalysed reaction is (2R,3S)-3-isopropylmalate = (2S)-2-isopropylmalate. It functions in the pathway amino-acid biosynthesis; L-leucine biosynthesis; L-leucine from 3-methyl-2-oxobutanoate: step 2/4. Catalyzes the isomerization between 2-isopropylmalate and 3-isopropylmalate, via the formation of 2-isopropylmaleate. The chain is 3-isopropylmalate dehydratase small subunit from Shewanella sp. (strain MR-7).